A 407-amino-acid chain; its full sequence is Zinc finger protein 552 (407 aa).

In terms of domain architecture, KRAB spans 14–90 (VTFEDVAVKF…PMAGVSPKKA (77 aa)). A C2H2-type 1 zinc finger spans residues 91–113 (HPCEMCGPILGDILHVADHQGTH). Residues 119-141 (HRCEAWGNKLYDSGNFHQHQNEH) form a C2H2-type 2; degenerate zinc finger. Residues K176 and K198 each participate in a glycyl lysine isopeptide (Lys-Gly) (interchain with G-Cter in SUMO2) cross-link. The segment at 212–234 (YSCGGCMKHFSTKDILSQHERLL) adopts a C2H2-type 3; degenerate zinc-finger fold. A C2H2-type 4; degenerate zinc finger spans residues 244-262 (ECGKSSSKYDSFSNHQGVH). Residues K251 and K266 each participate in a glycyl lysine isopeptide (Lys-Gly) (interchain with G-Cter in SUMO2) cross-link. 5 C2H2-type zinc fingers span residues 268–290 (YTCG…QRIH), 296–318 (YECE…QRVH), 324–346 (YECS…KRVH), 352–374 (YECS…RRVH), and 380–402 (YGCS…QRVH). K308 is covalently cross-linked (Glycyl lysine isopeptide (Lys-Gly) (interchain with G-Cter in SUMO2)).

This sequence belongs to the krueppel C2H2-type zinc-finger protein family.

The protein resides in the nucleus. Its function is as follows. May be involved in transcriptional regulation. This chain is Zinc finger protein 552 (ZNF552), found in Homo sapiens (Human).